We begin with the raw amino-acid sequence, 873 residues long: Cilia- and flagella-associated protein 58 (873 aa).

Coiled-coil stretches lie at residues 106-609 (VDSA…VISE) and 642-832 (ETQY…QKRK). The tract at residues 202 to 221 (QEIQHRQNEASRESRKKEKL) is disordered. The span at 204–221 (IQHRQNEASRESRKKEKL) shows a compositional bias: basic and acidic residues.

Belongs to the CFAP58 family. Interacts with ODFP2. As to expression, predominantly expressed in the testis. Also found at lower levels in ciliated cells and tissues such as neural progenitor cells and oviducts.

It localises to the cell projection. It is found in the cilium. The protein resides in the flagellum. Its subcellular location is the cytoplasm. The protein localises to the cytoskeleton. It localises to the microtubule organizing center. It is found in the centrosome. Functionally, has an essential role in the assembly and organization of the sperm flagellar axoneme. Required for the elongation of the primary cilium and sperm flagellar midpiece via modulation of the Notch signaling pathway. This Mus musculus (Mouse) protein is Cilia- and flagella-associated protein 58.